We begin with the raw amino-acid sequence, 225 residues long: NAD(P)H-quinone oxidoreductase subunit K, chloroplastic (225 aa).

[4Fe-4S] cluster-binding residues include Cys43, Cys44, Cys108, and Cys139.

It belongs to the complex I 20 kDa subunit family. NDH is composed of at least 16 different subunits, 5 of which are encoded in the nucleus. [4Fe-4S] cluster serves as cofactor.

The protein resides in the plastid. Its subcellular location is the chloroplast thylakoid membrane. The catalysed reaction is a plastoquinone + NADH + (n+1) H(+)(in) = a plastoquinol + NAD(+) + n H(+)(out). The enzyme catalyses a plastoquinone + NADPH + (n+1) H(+)(in) = a plastoquinol + NADP(+) + n H(+)(out). Functionally, NDH shuttles electrons from NAD(P)H:plastoquinone, via FMN and iron-sulfur (Fe-S) centers, to quinones in the photosynthetic chain and possibly in a chloroplast respiratory chain. The immediate electron acceptor for the enzyme in this species is believed to be plastoquinone. Couples the redox reaction to proton translocation, and thus conserves the redox energy in a proton gradient. This is NAD(P)H-quinone oxidoreductase subunit K, chloroplastic from Capsella bursa-pastoris (Shepherd's purse).